Here is a 423-residue protein sequence, read N- to C-terminus: Replication factor C large subunit (423 aa).

Residue 63-70 (GPPGIGKT) coordinates ATP.

Belongs to the activator 1 small subunits family. RfcL subfamily. In terms of assembly, heteromultimer composed of small subunits (RfcS) and large subunits (RfcL).

Part of the RFC clamp loader complex which loads the PCNA sliding clamp onto DNA. The protein is Replication factor C large subunit of Pyrobaculum islandicum (strain DSM 4184 / JCM 9189 / GEO3).